Consider the following 269-residue polypeptide: Shikimate dehydrogenase (NADP(+)) (269 aa).

Residues 17-19 (SKS) and threonine 64 each bind shikimate. Lysine 68 (proton acceptor) is an active-site residue. Glutamate 80 provides a ligand contact to NADP(+). Shikimate contacts are provided by asparagine 89 and aspartate 105. NADP(+)-binding positions include 130 to 134 (GAGGA), 154 to 159 (NRTHAK), and methionine 213. Tyrosine 215 contributes to the shikimate binding site. Position 237 (glycine 237) interacts with NADP(+).

The protein belongs to the shikimate dehydrogenase family. Homodimer.

The catalysed reaction is shikimate + NADP(+) = 3-dehydroshikimate + NADPH + H(+). It functions in the pathway metabolic intermediate biosynthesis; chorismate biosynthesis; chorismate from D-erythrose 4-phosphate and phosphoenolpyruvate: step 4/7. Involved in the biosynthesis of the chorismate, which leads to the biosynthesis of aromatic amino acids. Catalyzes the reversible NADPH linked reduction of 3-dehydroshikimate (DHSA) to yield shikimate (SA). The polypeptide is Shikimate dehydrogenase (NADP(+)) (Neisseria flavescens).